Here is a 1727-residue protein sequence, read N- to C-terminus: Nucleoporin alm1 (1727 aa).

7 coiled-coil regions span residues 57 to 361, 443 to 463, 542 to 740, 804 to 1106, 1223 to 1427, 1497 to 1555, and 1601 to 1664; these read QEVN…KNTS, NFLS…QAEL, IKEA…AEEL, AARK…INES, GERS…QLNK, NEEE…AESA, and QKEW…KKDS. The span at 1423-1448 shows a compositional bias: polar residues; sequence EQLNKPSATPTATTQSEPSTVSLEEF. Disordered regions lie at residues 1423–1459, 1477–1500, and 1656–1727; these read EQLN…SSTQ, EKVR…NEEE, and LEQS…KKAK. 2 stretches are compositionally biased toward polar residues: residues 1672 to 1684 and 1702 to 1714; these read ASKN…SNSE and VDTN…SSSD. Serine 1706 is subject to Phosphoserine.

Its subcellular location is the nucleus. The protein localises to the nuclear pore complex. It localises to the nucleus envelope. In terms of biological role, maintains the proteasome and its anchor cut8 at the nucleus envelope and is required for kinetochore component proteostasis. Proper kinetochore stoichiometry ensures the correct attachment of kinetochores to spindle microtubules during cytokinesis. Required for the localization of spindle assembly checkpoint (SAC) protein mad2 and bub1 to the nucleus envelope during interphase, but not their localization during mitosis. The protein is Nucleoporin alm1 of Schizosaccharomyces pombe (strain 972 / ATCC 24843) (Fission yeast).